The following is a 221-amino-acid chain: MDIEKAASRREEEEPIVQRPKLDKGKGKAHVFAPPMNYNRIMDKHKQEKVSAAGWKRGVAIFDFVLRLIAAITAMAAAAKMATTEETLPFFTQFLQFQAEYTDLPTMSSFVIVNSIVGGYLTLSLPFSIVCILRPLAVPPRLFLIICDTAMMGLTMMAASASAAIVYLAHNGNSSSNWLPVCQQFGDFCQGTSGAVVASFIAATLLMFLVILSAFALKRST.

Positions methionine 1–glutamate 12 are enriched in basic and acidic residues. The interval methionine 1–lysine 28 is disordered. The Cytoplasmic segment spans residues methionine 1–glycine 58. The helical transmembrane segment at valine 59–alanine 79 threads the bilayer. Residues lysine 80 to serine 109 are Extracellular-facing. Residues phenylalanine 110–valine 130 form a helical membrane-spanning segment. At cysteine 131 to aspartate 148 the chain is on the cytoplasmic side. A helical transmembrane segment spans residues threonine 149–alanine 169. The Extracellular portion of the chain corresponds to histidine 170 to glycine 194. N-linked (GlcNAc...) asparagine glycosylation occurs at asparagine 173. The helical transmembrane segment at alanine 195–phenylalanine 215 threads the bilayer. Residues alanine 216–threonine 221 lie on the Cytoplasmic side of the membrane.

The protein belongs to the Casparian strip membrane proteins (CASP) family. Homodimer and heterodimers.

It is found in the cell membrane. Its function is as follows. Regulates membrane-cell wall junctions and localized cell wall deposition. Required for establishment of the Casparian strip membrane domain (CSD) and the subsequent formation of Casparian strips, a cell wall modification of the root endodermis that determines an apoplastic barrier between the intraorganismal apoplasm and the extraorganismal apoplasm and prevents lateral diffusion. In Arabidopsis lyrata subsp. lyrata (Lyre-leaved rock-cress), this protein is Casparian strip membrane protein 3.